The primary structure comprises 505 residues: Probable cytochrome P450 28a5 (505 aa).

C450 provides a ligand contact to heme.

Belongs to the cytochrome P450 family. Heme serves as cofactor.

The protein localises to the endoplasmic reticulum membrane. The protein resides in the microsome membrane. May be involved in the metabolism of insect hormones and in the breakdown of synthetic insecticides. This Drosophila melanogaster (Fruit fly) protein is Probable cytochrome P450 28a5 (Cyp28a5).